Consider the following 913-residue polypeptide: DNA mismatch repair protein MutS (913 aa).

720–727 (GPNASGKS) is an ATP binding site.

Belongs to the DNA mismatch repair MutS family.

This protein is involved in the repair of mismatches in DNA. It is possible that it carries out the mismatch recognition step. This protein has a weak ATPase activity. In Prochlorococcus marinus (strain MIT 9312), this protein is DNA mismatch repair protein MutS.